We begin with the raw amino-acid sequence, 355 residues long: Glycerol-1-phosphate dehydrogenase [NAD(P)+] (355 aa).

Residues 101–105 and 123–126 each bind NAD(+); these read GKSID and TAAS. Asp128 lines the substrate pocket. Residue Ser132 participates in NAD(+) binding. Asp175 contacts substrate. Residues Asp175 and His255 each contribute to the Zn(2+) site. His259 is a binding site for substrate. Position 271 (His271) interacts with Zn(2+).

Belongs to the glycerol-1-phosphate dehydrogenase family. Homodimer. It depends on Zn(2+) as a cofactor.

The protein resides in the cytoplasm. The catalysed reaction is sn-glycerol 1-phosphate + NAD(+) = dihydroxyacetone phosphate + NADH + H(+). It carries out the reaction sn-glycerol 1-phosphate + NADP(+) = dihydroxyacetone phosphate + NADPH + H(+). It participates in membrane lipid metabolism; glycerophospholipid metabolism. Catalyzes the NAD(P)H-dependent reduction of dihydroxyacetonephosphate (DHAP or glycerone phosphate) to glycerol 1-phosphate (G1P). The G1P thus generated is used as the glycerophosphate backbone of phospholipids in the cellular membranes of Archaea. The polypeptide is Glycerol-1-phosphate dehydrogenase [NAD(P)+] (Staphylothermus marinus (strain ATCC 43588 / DSM 3639 / JCM 9404 / F1)).